Reading from the N-terminus, the 616-residue chain is MALLQISEPGMSSAPHQRRLAAGIDLGTTHSLVATVRSGQPETLADHQGRHLLPSVVHYQAQGYNVGYDARAQAADDPVNTISSVKRLMGRSLADIQARYPHLPYQLRASENGLPMIDTPAGLLNPVRVSADILKALAERAREALAGDLDGVVITVPAYFDDAQRQGTKDAARLAGLHVLRLLNEPTAAAIAYGLDSGQEGVIAVYDLGGGTFDISVLRLSRGVFEVLATGGDSALGGDDFDHLLADYIREQAGIADRSDNRIQRQLLDAATQAKIELSDADVAQVNVAGWQGSITREQFNELIAPLVKRTLLSCRRALKDAGVEASDVLEVVMVGGSTRVPLVRERVGEFFGRTPLTSIDPDRVVAIGAAIQADILVGNKPDSEMLLLDVIPLSLGLETMGGLVEKVIPRNTTIPVARAQEFTTFKDGQTAMAIHVMQGERELVQDCRSLARFTLRGIPAMPAGGAHIRVTFQVDADGLLSVTAMEKSTGVEASIQVKPSYGLTDGEIASMIQDSMSFAEQDVQARMLAEQKVEAARVLESLDGALKSDGALLSAAERAAIDDAMAQLRAAAEGNDASAIEDAIKNTDKQTQEFAARRMDESIRQALKGHSVDEV.

This sequence belongs to the heat shock protein 70 family.

In terms of biological role, chaperone involved in the maturation of iron-sulfur cluster-containing proteins. Has a low intrinsic ATPase activity which is markedly stimulated by HscB. Involved in the maturation of IscU. This chain is Chaperone protein HscA, found in Cronobacter sakazakii (strain ATCC BAA-894) (Enterobacter sakazakii).